The primary structure comprises 456 residues: Methylenetetrahydrofolate--tRNA-(uracil-5-)-methyltransferase TrmFO (456 aa).

Residue 11–16 (GGGLAG) participates in FAD binding.

Belongs to the MnmG family. TrmFO subfamily. FAD is required as a cofactor.

The protein resides in the cytoplasm. It carries out the reaction uridine(54) in tRNA + (6R)-5,10-methylene-5,6,7,8-tetrahydrofolate + NADH + H(+) = 5-methyluridine(54) in tRNA + (6S)-5,6,7,8-tetrahydrofolate + NAD(+). The catalysed reaction is uridine(54) in tRNA + (6R)-5,10-methylene-5,6,7,8-tetrahydrofolate + NADPH + H(+) = 5-methyluridine(54) in tRNA + (6S)-5,6,7,8-tetrahydrofolate + NADP(+). Functionally, catalyzes the folate-dependent formation of 5-methyl-uridine at position 54 (M-5-U54) in all tRNAs. The polypeptide is Methylenetetrahydrofolate--tRNA-(uracil-5-)-methyltransferase TrmFO (Synechocystis sp. (strain ATCC 27184 / PCC 6803 / Kazusa)).